The following is a 134-amino-acid chain: Phosphoribosyl-AMP cyclohydrolase (134 aa).

D80 lines the Mg(2+) pocket. C81 is a binding site for Zn(2+). Positions 82 and 84 each coordinate Mg(2+). The Zn(2+) site is built by C98 and C105.

This sequence belongs to the PRA-CH family. Homodimer. Mg(2+) serves as cofactor. Requires Zn(2+) as cofactor.

It is found in the cytoplasm. It carries out the reaction 1-(5-phospho-beta-D-ribosyl)-5'-AMP + H2O = 1-(5-phospho-beta-D-ribosyl)-5-[(5-phospho-beta-D-ribosylamino)methylideneamino]imidazole-4-carboxamide. It participates in amino-acid biosynthesis; L-histidine biosynthesis; L-histidine from 5-phospho-alpha-D-ribose 1-diphosphate: step 3/9. Catalyzes the hydrolysis of the adenine ring of phosphoribosyl-AMP. The polypeptide is Phosphoribosyl-AMP cyclohydrolase (Janthinobacterium sp. (strain Marseille) (Minibacterium massiliensis)).